The primary structure comprises 614 residues: Zinc metalloproteinase-disintegrin-like HR1b (614 aa).

Residues 1–20 form the signal peptide; sequence MIQVLLVTICLAVFPYQGSS. A propeptide spanning residues 21 to 191 is cleaved from the precursor; that stretch reads IILESGNVND…KASKLVVTAE (171 aa). Q192 bears the Pyrrolidone carboxylic acid mark. The Peptidase M12B domain occupies 198 to 394; it reads RYIKLAIVVD…HKPQCILNAP (197 aa). N264 carries an N-linked (GlcNAc...) asparagine glycan. Intrachain disulfides connect C309/C389, C349/C373, and C351/C356. H334 lines the Zn(2+) pocket. E335 is an active-site residue. The Zn(2+) site is built by H338 and H344. Residue N372 is glycosylated (N-linked (GlcNAc...) asparagine). The propeptide occupies 395 to 398; it reads SKTD. Positions 402–488 constitute a Disintegrin domain; it reads PPVCGNELLE…DCPTDRFHRN (87 aa). Residues V404, N407, L409, E411, E414, and D417 each coordinate Ca(2+). Cystine bridges form between C405–C424, C405–C434, C416–C429, C416–C434, C418–C424, C428–C451, C442–C448, C447–C473, C460–C480, C467–C492, C467–C499, C492–C504, C499–C504, C511–C526, C511–C561, C526–C568, C539–C549, C549–C556, C556–C593, C561–C568, C587–C598, and C593–C598. Positions 466-468 match the D/ECD-tripeptide motif; that stretch reads ECD. N518 is a glycosylation site (N-linked (GlcNAc...) asparagine). N571 carries N-linked (GlcNAc...) asparagine glycosylation. The propeptide occupies 608–614; sequence TTVFSLI.

It belongs to the venom metalloproteinase (M12B) family. P-III subfamily. P-IIIb sub-subfamily. In terms of assembly, monomer. It depends on Zn(2+) as a cofactor. In terms of tissue distribution, expressed by the venom gland.

It is found in the secreted. Functionally, zinc protease that induces hemorrhage. Has preference for Tyr, Leu, Arg, Met, and Phe at the P1 position, in descending order (in vitro). Shows equal preference for the sequences of Ala-Asp and Arg-Ile at the P3-P2 position with different enzyme cleavage sites across the P1 position: the N-terminus side for Ala-Asp and the C-terminus side for Arg-Ile. In terms of biological role, inhibits platelet aggregation induced by ADP, thrombin, platelet-activating factor and collagen. Acts by inhibiting fibrinogen interaction with platelet receptors alpha-IIb/beta-3 (ITGA2B/ITGB3). This Protobothrops flavoviridis (Habu) protein is Zinc metalloproteinase-disintegrin-like HR1b.